The following is a 130-amino-acid chain: Small ribosomal subunit protein uS11 (130 aa).

Belongs to the universal ribosomal protein uS11 family. As to quaternary structure, part of the 30S ribosomal subunit.

In terms of biological role, located on the platform of the 30S subunit. In Thermoplasma acidophilum (strain ATCC 25905 / DSM 1728 / JCM 9062 / NBRC 15155 / AMRC-C165), this protein is Small ribosomal subunit protein uS11.